The chain runs to 435 residues: MAAPLKAVDGNADRTGDLQALMSDLAARARAAARVLALAPPEQKNRALEAMERAIRSNAAAILAANAEDVAEARASSNMTASFIDRLTLTPARVESMAEGIGIVRGIADPVGIVTESWQRPNGMTIERVRVPLGVVGVIFESRPNVAADAGVLCLKSGNAVILRGGSDSFRSCRAIHECLVQGLREAGLPEAAITLVPTRDRAAVGMMLSGLNGAIDVIVPRGGKSLVARVEQEARVPVFAHLEGVNHVYVDASADLAMAKSIVLNAKMRRTGVCGAAETLLVDRAAAATSLKPLVEMLIEAGCEVRGDDVVQKTDARVKPANDDDWDTEYLDAIIAAKVVDGVDGAIAHIQNHGSHHTDAIVSENEAAAKKFLSEVDSAIVLHNASTQFADGGEFGFGAEIGIATGRFHARGPVGAEQLTSFKYRVHGTGQTRP.

It belongs to the gamma-glutamyl phosphate reductase family.

Its subcellular location is the cytoplasm. The enzyme catalyses L-glutamate 5-semialdehyde + phosphate + NADP(+) = L-glutamyl 5-phosphate + NADPH + H(+). It functions in the pathway amino-acid biosynthesis; L-proline biosynthesis; L-glutamate 5-semialdehyde from L-glutamate: step 2/2. In terms of biological role, catalyzes the NADPH-dependent reduction of L-glutamate 5-phosphate into L-glutamate 5-semialdehyde and phosphate. The product spontaneously undergoes cyclization to form 1-pyrroline-5-carboxylate. The protein is Gamma-glutamyl phosphate reductase of Bradyrhizobium diazoefficiens (strain JCM 10833 / BCRC 13528 / IAM 13628 / NBRC 14792 / USDA 110).